The chain runs to 1106 residues: Carbamoyl phosphate synthase large chain (1106 aa).

The segment at 1–402 (MPRRQDLNSV…ALQKAMRSLE (402 aa)) is carboxyphosphate synthetic domain. Arginine 129, arginine 169, glycine 175, glycine 176, glutamate 208, isoleucine 210, glutamate 215, glycine 241, valine 242, histidine 243, glutamine 285, and glutamate 299 together coordinate ATP. Residues 133–328 (KGVVERCGAE…IAKIATKLSL (196 aa)) form the ATP-grasp 1 domain. 3 residues coordinate Mg(2+): glutamine 285, glutamate 299, and asparagine 301. Residues glutamine 285, glutamate 299, and asparagine 301 each contribute to the Mn(2+) site. Residues 403–550 (QKGSAFSFAR…YHYSSYDRET (148 aa)) form an oligomerization domain region. The segment at 551-953 (EVAPHEKPSV…AFAKAQAAAG (403 aa)) is carbamoyl phosphate synthetic domain. Positions 681 to 872 (ARVLTEAGLR…MAKAAALIGT (192 aa)) constitute an ATP-grasp 2 domain. 10 residues coordinate ATP: arginine 717, lysine 756, leucine 758, glutamate 763, glycine 788, isoleucine 789, histidine 790, serine 791, glutamine 831, and glutamate 843. Positions 831, 843, and 845 each coordinate Mg(2+). Mn(2+)-binding residues include glutamine 831, glutamate 843, and asparagine 845. One can recognise an MGS-like domain in the interval 954-1106 (GPLPTSGSLF…ERAAQEASRD (153 aa)). The tract at residues 954–1106 (GPLPTSGSLF…ERAAQEASRD (153 aa)) is allosteric domain.

It belongs to the CarB family. Composed of two chains; the small (or glutamine) chain promotes the hydrolysis of glutamine to ammonia, which is used by the large (or ammonia) chain to synthesize carbamoyl phosphate. Tetramer of heterodimers (alpha,beta)4. The cofactor is Mg(2+). It depends on Mn(2+) as a cofactor.

It carries out the reaction hydrogencarbonate + L-glutamine + 2 ATP + H2O = carbamoyl phosphate + L-glutamate + 2 ADP + phosphate + 2 H(+). The catalysed reaction is hydrogencarbonate + NH4(+) + 2 ATP = carbamoyl phosphate + 2 ADP + phosphate + 2 H(+). Its pathway is amino-acid biosynthesis; L-arginine biosynthesis; carbamoyl phosphate from bicarbonate: step 1/1. It participates in pyrimidine metabolism; UMP biosynthesis via de novo pathway; (S)-dihydroorotate from bicarbonate: step 1/3. Functionally, large subunit of the glutamine-dependent carbamoyl phosphate synthetase (CPSase). CPSase catalyzes the formation of carbamoyl phosphate from the ammonia moiety of glutamine, carbonate, and phosphate donated by ATP, constituting the first step of 2 biosynthetic pathways, one leading to arginine and/or urea and the other to pyrimidine nucleotides. The large subunit (synthetase) binds the substrates ammonia (free or transferred from glutamine from the small subunit), hydrogencarbonate and ATP and carries out an ATP-coupled ligase reaction, activating hydrogencarbonate by forming carboxy phosphate which reacts with ammonia to form carbamoyl phosphate. The protein is Carbamoyl phosphate synthase large chain of Kocuria rhizophila (strain ATCC 9341 / DSM 348 / NBRC 103217 / DC2201).